The sequence spans 146 residues: Hemoglobin subunit beta-1/2 (146 aa).

V1 is subject to N-acetylvaline. Positions 2–146 constitute a Globin domain; the sequence is HLTPDEKNAV…VATALAHKYH (145 aa). Position 44 is a phosphoserine (S44). K59 is subject to N6-acetyllysine. H63 and H92 together coordinate heme b. An S-nitrosocysteine modification is found at C93. K144 is modified (N6-acetyllysine).

Belongs to the globin family. As to quaternary structure, heterotetramer of two alpha chains and two beta chains. In terms of tissue distribution, red blood cells.

Functionally, involved in oxygen transport from the lung to the various peripheral tissues. The polypeptide is Hemoglobin subunit beta-1/2 (HBB) (Otolemur crassicaudatus (Brown greater galago)).